The primary structure comprises 639 residues: 1-deoxy-D-xylulose-5-phosphate synthase (639 aa).

Thiamine diphosphate-binding positions include histidine 76 and 117–119 (AHS). Residue aspartate 148 participates in Mg(2+) binding. Thiamine diphosphate is bound by residues 149-150 (GS), asparagine 181, tyrosine 288, and glutamate 370. Asparagine 181 serves as a coordination point for Mg(2+).

Belongs to the transketolase family. DXPS subfamily. In terms of assembly, homodimer. Mg(2+) serves as cofactor. The cofactor is thiamine diphosphate.

The enzyme catalyses D-glyceraldehyde 3-phosphate + pyruvate + H(+) = 1-deoxy-D-xylulose 5-phosphate + CO2. It functions in the pathway metabolic intermediate biosynthesis; 1-deoxy-D-xylulose 5-phosphate biosynthesis; 1-deoxy-D-xylulose 5-phosphate from D-glyceraldehyde 3-phosphate and pyruvate: step 1/1. Catalyzes the acyloin condensation reaction between C atoms 2 and 3 of pyruvate and glyceraldehyde 3-phosphate to yield 1-deoxy-D-xylulose-5-phosphate (DXP). The chain is 1-deoxy-D-xylulose-5-phosphate synthase from Leptothrix cholodnii (strain ATCC 51168 / LMG 8142 / SP-6) (Leptothrix discophora (strain SP-6)).